A 519-amino-acid polypeptide reads, in one-letter code: Tetratricopeptide repeat protein 31 (519 aa).

Residues 147-197 (QKLLVTEEEANRLAEELVAEEERMKQKAEKKRLKKKRQKERKRQERLEQYC) adopt a coiled-coil conformation. Over residues 175–187 (EKKRLKKKRQKER) the composition is skewed to basic residues. Disordered regions lie at residues 175–230 (EKKR…EEDS) and 253–294 (RREK…VQAS). A Phosphoserine modification is found at Ser-278. 3 TPR repeats span residues 305–338 (SQELAKLGTSFAQNGFYHEAVVLFTQALKLNPQD), 339–372 (HRLFGNRSFCHERLGQPAWALADAQVALTLRPGW), and 373–406 (PRGLFRLGKALMGLQRFREAAAVFQETLRGGSQP). A disordered region spans residues 474-506 (PSCHRSHPNQPLSQTQSRRPHPLKPQDPSKGWD). Residues 481 to 490 (PNQPLSQTQS) are compositionally biased toward polar residues.

This is Tetratricopeptide repeat protein 31 (TTC31) from Homo sapiens (Human).